A 294-amino-acid chain; its full sequence is Small ribosomal subunit protein uS3 (294 aa).

The region spanning 39–107 is the KH type-2 domain; the sequence is VREYLKTKLK…PVAVNIEEVR (69 aa). Residues 210-294 form a disordered region; the sequence is RNDLPAVETP…AAPAADVKGE (85 aa). Positions 219–238 are enriched in basic and acidic residues; it reads PRPDEERRPRGPRRDGRPGG. Low complexity-rich tracts occupy residues 249–258 and 281–294; these read RPAAGNSAPA and VAAP…VKGE.

Belongs to the universal ribosomal protein uS3 family. As to quaternary structure, part of the 30S ribosomal subunit. Forms a tight complex with proteins S10 and S14.

Functionally, binds the lower part of the 30S subunit head. Binds mRNA in the 70S ribosome, positioning it for translation. This Verminephrobacter eiseniae (strain EF01-2) protein is Small ribosomal subunit protein uS3.